Consider the following 384-residue polypeptide: NADH-ubiquinone oxidoreductase chain 5 (384 aa).

The next 12 helical transmembrane spans lie at 12–32 (FYFLMSISLSLFLISLKFLLM), 50–70 (IVMTFLFDWMSLMFMSFVLLI), 92–112 (ILLVLMFVMSMMMLIISPNLI), 113–133 (SILLGWDGLGLVSYCLVIYFQ), 153–173 (VALLLAIAWMLNYGSWNYIFY), 183–203 (MMIIGGLVMLAAMTKSAQIPF), 215–235 (TPVSALVHSSTLVTAGVYLLI), 244–264 (WWMAQFLLLVSGLTMFMAGLG), 274–293 (IIALSTLSQLGLMMSILSMG), 298–320 (AFFHLLTHALFKALLFMCAGSII), 343–363 (CSCFNVANLALCGMPFLAGFY), and 364–384 (SKDLILEMVMLSYVNVFSFFL).

This sequence belongs to the complex I subunit 5 family.

Its subcellular location is the mitochondrion inner membrane. It catalyses the reaction a ubiquinone + NADH + 5 H(+)(in) = a ubiquinol + NAD(+) + 4 H(+)(out). Its function is as follows. Core subunit of the mitochondrial membrane respiratory chain NADH dehydrogenase (Complex I) that is believed to belong to the minimal assembly required for catalysis. Complex I functions in the transfer of electrons from NADH to the respiratory chain. The immediate electron acceptor for the enzyme is believed to be ubiquinone. The chain is NADH-ubiquinone oxidoreductase chain 5 (ND5) from Anopheles arabiensis (Mosquito).